Consider the following 153-residue polypeptide: Small ribosomal subunit protein bS16 (153 aa).

Residues 130–153 (EAEAAAAAEEAPAEEAAEEAPAEA) form a disordered region. Over residues 140–153 (APAEEAAEEAPAEA) the composition is skewed to acidic residues.

This sequence belongs to the bacterial ribosomal protein bS16 family.

This is Small ribosomal subunit protein bS16 from Bifidobacterium longum (strain NCC 2705).